The chain runs to 446 residues: Tubulin beta-2 chain (446 aa).

Residues Gln11, Glu69, Ser138, Gly142, Thr143, Gly144, Asn204, and Asn226 each contribute to the GTP site. Glu69 contributes to the Mg(2+) binding site. The segment at 424–446 (QYQEATADEEGEFDEDEEGGGDE) is disordered. The span at 429-446 (TADEEGEFDEDEEGGGDE) shows a compositional bias: acidic residues.

It belongs to the tubulin family. As to quaternary structure, dimer of alpha and beta chains. A typical microtubule is a hollow water-filled tube with an outer diameter of 25 nm and an inner diameter of 15 nM. Alpha-beta heterodimers associate head-to-tail to form protofilaments running lengthwise along the microtubule wall with the beta-tubulin subunit facing the microtubule plus end conferring a structural polarity. Microtubules usually have 13 protofilaments but different protofilament numbers can be found in some organisms and specialized cells. The cofactor is Mg(2+).

It is found in the cytoplasm. It localises to the cytoskeleton. Functionally, tubulin is the major constituent of microtubules, a cylinder consisting of laterally associated linear protofilaments composed of alpha- and beta-tubulin heterodimers. Microtubules grow by the addition of GTP-tubulin dimers to the microtubule end, where a stabilizing cap forms. Below the cap, tubulin dimers are in GDP-bound state, owing to GTPase activity of alpha-tubulin. The protein is Tubulin beta-2 chain (betaTub85D) of Drosophila erecta (Fruit fly).